The sequence spans 205 residues: Holliday junction branch migration complex subunit RuvA (205 aa).

The domain I stretch occupies residues 1–64; it reads MIGKLKGIID…EDQIKLFGFR (64 aa). Positions 65-143 are domain II; it reads TDTEREWFRL…ALSAVDPAVV (79 aa). The flexible linker stretch occupies residues 144–154; the sequence is KLSGAIDDNRA. The segment at 154–205 is domain III; the sequence is APRAVTDAISALVNLGYGQPQAAAAVATASRTAGEDAETAQLIKLGLKELSK.

Belongs to the RuvA family. Homotetramer. Forms an RuvA(8)-RuvB(12)-Holliday junction (HJ) complex. HJ DNA is sandwiched between 2 RuvA tetramers; dsDNA enters through RuvA and exits via RuvB. An RuvB hexamer assembles on each DNA strand where it exits the tetramer. Each RuvB hexamer is contacted by two RuvA subunits (via domain III) on 2 adjacent RuvB subunits; this complex drives branch migration. In the full resolvosome a probable DNA-RuvA(4)-RuvB(12)-RuvC(2) complex forms which resolves the HJ.

The protein resides in the cytoplasm. Functionally, the RuvA-RuvB-RuvC complex processes Holliday junction (HJ) DNA during genetic recombination and DNA repair, while the RuvA-RuvB complex plays an important role in the rescue of blocked DNA replication forks via replication fork reversal (RFR). RuvA specifically binds to HJ cruciform DNA, conferring on it an open structure. The RuvB hexamer acts as an ATP-dependent pump, pulling dsDNA into and through the RuvAB complex. HJ branch migration allows RuvC to scan DNA until it finds its consensus sequence, where it cleaves and resolves the cruciform DNA. The protein is Holliday junction branch migration complex subunit RuvA of Rhodopseudomonas palustris (strain TIE-1).